The primary structure comprises 634 residues: Chaperone protein HtpG (634 aa).

Positions 1–344 are a; substrate-binding; it reads MSETVSQNKE…SNDLPLNVSR (344 aa). The interval 345–561 is b; it reads EILQDNKVTQ…DYEMGTQMAK (217 aa). Residues 562-634 form a c region; sequence LLAAAGQAVP…GAINKLLTKV (73 aa).

It belongs to the heat shock protein 90 family. As to quaternary structure, homodimer.

The protein resides in the cytoplasm. Functionally, molecular chaperone. Has ATPase activity. This chain is Chaperone protein HtpG, found in Vibrio parahaemolyticus serotype O3:K6 (strain RIMD 2210633).